The chain runs to 134 residues: Large ribosomal subunit protein uL16c (134 aa).

The span at 1 to 17 shows a compositional bias: basic residues; the sequence is MLSPKRTRFRKQHRGRM. Residues 1–22 are disordered; it reads MLSPKRTRFRKQHRGRMKGISS.

The protein belongs to the universal ribosomal protein uL16 family. In terms of assembly, part of the 50S ribosomal subunit.

The protein localises to the plastid. It is found in the chloroplast. The polypeptide is Large ribosomal subunit protein uL16c (Solanum tuberosum (Potato)).